The following is a 111-amino-acid chain: Universal stress protein B (111 aa).

The next 2 helical transmembrane spans lie at 1-21 and 90-110; these read MIST…NMAR and FILT…LILW.

This sequence belongs to the universal stress protein B family.

The protein localises to the cell inner membrane. This is Universal stress protein B from Yersinia enterocolitica serotype O:8 / biotype 1B (strain NCTC 13174 / 8081).